The primary structure comprises 293 residues: 4-hydroxy-tetrahydrodipicolinate synthase (293 aa).

Threonine 47 serves as a coordination point for pyruvate. The active-site Proton donor/acceptor is the tyrosine 135. Residue lysine 164 is the Schiff-base intermediate with substrate of the active site. Pyruvate is bound at residue isoleucine 206.

It belongs to the DapA family. In terms of assembly, homotetramer; dimer of dimers.

The protein resides in the cytoplasm. The catalysed reaction is L-aspartate 4-semialdehyde + pyruvate = (2S,4S)-4-hydroxy-2,3,4,5-tetrahydrodipicolinate + H2O + H(+). It participates in amino-acid biosynthesis; L-lysine biosynthesis via DAP pathway; (S)-tetrahydrodipicolinate from L-aspartate: step 3/4. In terms of biological role, catalyzes the condensation of (S)-aspartate-beta-semialdehyde [(S)-ASA] and pyruvate to 4-hydroxy-tetrahydrodipicolinate (HTPA). The sequence is that of 4-hydroxy-tetrahydrodipicolinate synthase from Flavobacterium psychrophilum (strain ATCC 49511 / DSM 21280 / CIP 103535 / JIP02/86).